The sequence spans 654 residues: MSDFQHAQLDWDENGQPLSRVFGDVYFSRHSGLDETRHVFLATNRLAERFAALGDGEALCIGETGFGTGLNFLCAWQLFERVAPPGARLEFVSVEKFPLAAADLRRALALWPELAPWSEPLLGQYLALHPGFQRLAFAGGRVGLTLLLGDALECLPQLDARIDAWFLDGFAPAKNPDMWSPALFAELARLSAPQATLGTFTSAGFVRRGLIEAGFAMQRVPGYGQKREMLGGTYQGPPASAGKPWYARPAPHAGRRAALVVGGGLAGCASAASLAARGWQVTLIERHPGLAREASGNPQGVLYLKLSAHGTPLSRLVLSGFGHTRRLLERLRRGHDWDACGVLQLAFDAKEAQRQAQLAAAFPADLLHGLDREQAERLAGVALPAGGLFYPEAGWVHPPALCQALATTPGITLLSGRAVRLRREGDDWCAYAGDECLARAPLAILATAADIRDFPPAAELPLKRIRGQVTRLPATAQSRALRTVVCAEGYVAPPRGDEHTLGASFDFKSEDLAPTLAEHQGNLELLREISPDLLQRLGADDLPLERLEGRAAFRCTSPDYLPLVGPLAERAAFDEAYAVLARDARQVPERACPWLPGLYLNSGHGSRGLISAPLSGELLAAWICGEPLPLPRAVGEACHPNRFLLRDLVRGQRG.

Residues 1–235 (MSDFQHAQLD…KREMLGGTYQ (235 aa)) form a tRNA (mnm(5)s(2)U34)-methyltransferase region. The FAD-dependent cmnm(5)s(2)U34 oxidoreductase stretch occupies residues 261-654 (VGGGLAGCAS…LRDLVRGQRG (394 aa)).

This sequence in the N-terminal section; belongs to the methyltransferase superfamily. tRNA (mnm(5)s(2)U34)-methyltransferase family. The protein in the C-terminal section; belongs to the DAO family. Requires FAD as cofactor.

Its subcellular location is the cytoplasm. It carries out the reaction 5-aminomethyl-2-thiouridine(34) in tRNA + S-adenosyl-L-methionine = 5-methylaminomethyl-2-thiouridine(34) in tRNA + S-adenosyl-L-homocysteine + H(+). Catalyzes the last two steps in the biosynthesis of 5-methylaminomethyl-2-thiouridine (mnm(5)s(2)U) at the wobble position (U34) in tRNA. Catalyzes the FAD-dependent demodification of cmnm(5)s(2)U34 to nm(5)s(2)U34, followed by the transfer of a methyl group from S-adenosyl-L-methionine to nm(5)s(2)U34, to form mnm(5)s(2)U34. The polypeptide is tRNA 5-methylaminomethyl-2-thiouridine biosynthesis bifunctional protein MnmC (Pseudomonas paraeruginosa (strain DSM 24068 / PA7) (Pseudomonas aeruginosa (strain PA7))).